The following is a 132-amino-acid chain: Small ribosomal subunit protein uS8 (132 aa).

This sequence belongs to the universal ribosomal protein uS8 family. In terms of assembly, part of the 30S ribosomal subunit. Contacts proteins S5 and S12.

Its function is as follows. One of the primary rRNA binding proteins, it binds directly to 16S rRNA central domain where it helps coordinate assembly of the platform of the 30S subunit. The protein is Small ribosomal subunit protein uS8 of Rickettsia canadensis (strain McKiel).